The following is a 30-amino-acid chain: U1-poneritoxin-Ni3d (30 aa).

It belongs to the ponericin-G family. As to expression, expressed by the venom gland.

Its subcellular location is the secreted. In terms of biological role, has activity against some Gram-positive bacteria and S.cerevisiae. Has a non-hemolytic activity. The sequence is that of U1-poneritoxin-Ni3d from Neoponera inversa (Ant).